The primary structure comprises 63 residues: Adipokinetic prohormone type 1 (63 aa).

The first 22 residues, 1 to 22 (MVQRCLVVALLVVVVAAALCSA), serve as a signal peptide directing secretion. At Q23 the chain carries Pyrrolidone carboxylic acid. T32 bears the Threonine amide mark.

Belongs to the AKH/HRTH/RPCH family. Adipokinetic hormone precursor-related peptide (APRP) can form three type of disulfide-bond dimers: p1 (alpha-alpha), p2 (alpha-beta), and p3 (beta-beta).

It localises to the secreted. In terms of biological role, this hormone, released from cells in the corpora cardiaca, causes release of diglycerides from the fat body and stimulation of muscles to use these diglycerides as an energy source during energy-demanding processes. The polypeptide is Adipokinetic prohormone type 1 (Schistocerca gregaria (Desert locust)).